A 788-amino-acid chain; its full sequence is Probable potassium transporter 9 (788 aa).

Residues 1–21 (MDPEFGRGMAPRKREPWRTTL) lie on the Cytoplasmic side of the membrane. A helical membrane pass occupies residues 22–42 (LLAYQSLGVVYGDLSISPLYV). At 43 to 59 (YKSTFAEDITHSESNEE) the chain is on the extracellular side. Residues 60 to 80 (IFGVLSFVFWTLTLIPLIKYV) traverse the membrane as a helical segment. Residues 81-151 (SIVLRADDNG…EKHKTLQTAL (71 aa)) are Cytoplasmic-facing. The helical transmembrane segment at 152–172 (LIMVMIGTCMVIGDGVLTPAI) threads the bilayer. Residues 173–191 (SVFSAVSGLELSLSRDQHE) are Extracellular-facing. A helical transmembrane segment spans residues 192–212 (YAVIPITCVILVFLFALQHYG). At 213-215 (THR) the chain is on the cytoplasmic side. Residues 216–236 (VGFLFAPIVLAWLICMSMLGL) traverse the membrane as a helical segment. The Extracellular segment spans residues 237–264 (YNIIHWNPQVYRALNPYYMLKFLRKTKK). Residues 265 to 285 (SGWMSLGGILLCMTGSEAMFA) form a helical membrane-spanning segment. The Cytoplasmic portion of the chain corresponds to 286 to 292 (DLGHFSY). A helical membrane pass occupies residues 293–313 (SAIQLAFTTLVYPALILGYMG). The Extracellular segment spans residues 314 to 343 (QAAYLSKHHTLNSTYQIGYYISVPESVRWP). The N-linked (GlcNAc...) asparagine glycan is linked to asparagine 325. A helical transmembrane segment spans residues 344–364 (VLVLAILASVVGSQAIISGTF). Residues 365–391 (SIINQSQSLSCFPRVKVVHTSENIHGQ) lie on the Cytoplasmic side of the membrane. The helical transmembrane segment at 392-412 (IYIPEINWLLMVLCIAVTVGF) threads the bilayer. Residues 413-422 (RDTKHMGNAS) are Extracellular-facing. Asparagine 420 carries an N-linked (GlcNAc...) asparagine glycan. The helical transmembrane segment at 423–443 (GLAVITVMLVTTCLTSLVIML) threads the bilayer. The Cytoplasmic segment spans residues 444–451 (CWHRSPAL). The helical transmembrane segment at 452–472 (ALVFFLFFGSIEVLYFSASLI) threads the bilayer. Over 473–476 (KFRE) the chain is Extracellular. The chain crosses the membrane as a helical span at residues 477–497 (GAWLPIMLALILMAVMFIWHH). Residues 498–788 (TTIKKYEFDL…LLEVGMVYVL (291 aa)) are Cytoplasmic-facing.

The protein belongs to the HAK/KUP transporter (TC 2.A.72.3) family.

The protein resides in the membrane. Its function is as follows. High-affinity potassium transporter. The chain is Probable potassium transporter 9 (HAK9) from Oryza sativa subsp. japonica (Rice).